A 757-amino-acid chain; its full sequence is LPS-assembly protein LptD (757 aa).

The N-terminal stretch at Met-1–Ala-20 is a signal peptide.

Belongs to the LptD family. As to quaternary structure, component of the lipopolysaccharide transport and assembly complex. Interacts with LptE and LptA.

The protein localises to the cell outer membrane. Functionally, together with LptE, is involved in the assembly of lipopolysaccharide (LPS) at the surface of the outer membrane. The protein is LPS-assembly protein LptD of Idiomarina loihiensis (strain ATCC BAA-735 / DSM 15497 / L2-TR).